Here is a 537-residue protein sequence, read N- to C-terminus: 4-coumarate--CoA ligase (537 aa).

Positions 189, 190, 191, 192, 193, and 197 each coordinate ATP. (E)-4-coumaroyl-AMP is bound by residues tyrosine 239 and serine 243. Lysine 260 is a CoA binding site. Positions 262 to 331 (NLTTCLELIQ…ERFPKAIFGQ (70 aa)) are SBD1. (E)-4-coumaroyl-AMP contacts are provided by alanine 309, glutamine 331, glycine 332, threonine 336, and methionine 344. Residues glutamine 331, glycine 332, and threonine 336 each coordinate ATP. The SBD2 stretch occupies residues 332-399 (GYGMTEAGPV…IRGPEIMKGY (68 aa)). Residues aspartate 420 and arginine 435 each contribute to the ATP site. Residues lysine 437 and lysine 441 each contribute to the (E)-4-coumaroyl-AMP site. CoA-binding residues include lysine 443 and glycine 444. Lysine 524 is a binding site for ATP.

Belongs to the ATP-dependent AMP-binding enzyme family. Mg(2+) serves as cofactor.

The enzyme catalyses (E)-4-coumarate + ATP + CoA = (E)-4-coumaroyl-CoA + AMP + diphosphate. The catalysed reaction is (E)-4-coumarate + ATP + H(+) = (E)-4-coumaroyl-AMP + diphosphate. It catalyses the reaction (E)-4-coumaroyl-AMP + CoA = (E)-4-coumaroyl-CoA + AMP + H(+). It participates in phytoalexin biosynthesis; 3,4',5-trihydroxystilbene biosynthesis; 3,4',5-trihydroxystilbene from trans-4-coumarate: step 1/2. In terms of biological role, carboxylate--CoA ligase that may use 4-coumarate as substrate. Follows a two-step reaction mechanism, wherein the carboxylate substrate first undergoes adenylation by ATP, followed by a thioesterification in the presence of CoA to yield the final CoA thioester. This Pinus taeda (Loblolly pine) protein is 4-coumarate--CoA ligase (4CL).